Here is a 105-residue protein sequence, read N- to C-terminus: Large ribosomal subunit protein uL24 (105 aa).

This sequence belongs to the universal ribosomal protein uL24 family. Part of the 50S ribosomal subunit.

In terms of biological role, one of two assembly initiator proteins, it binds directly to the 5'-end of the 23S rRNA, where it nucleates assembly of the 50S subunit. One of the proteins that surrounds the polypeptide exit tunnel on the outside of the subunit. The polypeptide is Large ribosomal subunit protein uL24 (Pseudothermotoga lettingae (strain ATCC BAA-301 / DSM 14385 / NBRC 107922 / TMO) (Thermotoga lettingae)).